A 105-amino-acid chain; its full sequence is MRPEKLDAAAIAEQLHRMEGWVLAEDGGSIWKAFRFKSFAEAFAFMTQCAFAAEKLNHHPEWFNVYNKVDVTLSTHDAQGLTELDFKLAAKMDQAAEGRMPDHMK.

The protein belongs to the pterin-4-alpha-carbinolamine dehydratase family.

It carries out the reaction (4aS,6R)-4a-hydroxy-L-erythro-5,6,7,8-tetrahydrobiopterin = (6R)-L-erythro-6,7-dihydrobiopterin + H2O. The sequence is that of Putative pterin-4-alpha-carbinolamine dehydratase from Sinorhizobium medicae (strain WSM419) (Ensifer medicae).